The following is a 136-amino-acid chain: Histone H2A (136 aa).

Gly residues predominate over residues 1–11 (MTGGKSAGGKA). The segment at 1-23 (MTGGKSAGGKAGTTKNAQSRSSK) is disordered. N6-acetyllysine occurs at positions 5 and 10. Q107 is subject to N5-methylglutamine. S133 is subject to Phosphoserine. Positions 133–134 (SQ) match the [ST]-Q motif motif.

This sequence belongs to the histone H2A family. As to quaternary structure, the nucleosome is a histone octamer containing two molecules each of H2A, H2B, H3 and H4 assembled in one H3-H4 heterotetramer and two H2A-H2B heterodimers. The octamer wraps approximately 147 bp of DNA. Phosphorylated to form H2AS128ph (gamma-H2A) in response to DNA double-strand breaks (DSBs) generated by exogenous genotoxic agents and by stalled replication forks. Phosphorylation is dependent on the DNA damage checkpoint kinases MEC1/ATR and TEL1/ATM, spreads on either side of a detected DSB site and may mark the surrounding chromatin for recruitment of proteins required for DNA damage signaling and repair. Gamma-H2A is removed from the DNA prior to the strand invasion-primer extension step of the repair process and subsequently dephosphorylated. Dephosphorylation is necessary for efficient recovery from the DNA damage checkpoint. Post-translationally, acetylated by ESA1 to form H2AK4ac and H2AK7ac.

It is found in the nucleus. Its subcellular location is the chromosome. In terms of biological role, core component of nucleosome which plays a central role in DNA double strand break (DSB) repair. Nucleosomes wrap and compact DNA into chromatin, limiting DNA accessibility to the cellular machineries which require DNA as a template. Histones thereby play a central role in transcription regulation, DNA repair, DNA replication and chromosomal stability. DNA accessibility is regulated via a complex set of post-translational modifications of histones, also called histone code, and nucleosome remodeling. The chain is Histone H2A (hta1) from Botryotinia fuckeliana (strain B05.10) (Noble rot fungus).